The primary structure comprises 120 residues: Aspartate 1-decarboxylase (120 aa).

Serine 24 serves as the catalytic Schiff-base intermediate with substrate; via pyruvic acid. Position 24 is a pyruvic acid (Ser) (serine 24). Residue threonine 56 participates in substrate binding. Tyrosine 57 serves as the catalytic Proton donor. 70 to 72 serves as a coordination point for substrate; it reads GAA.

This sequence belongs to the PanD family. Heterooctamer of four alpha and four beta subunits. The cofactor is pyruvate. In terms of processing, is synthesized initially as an inactive proenzyme, which is activated by self-cleavage at a specific serine bond to produce a beta-subunit with a hydroxyl group at its C-terminus and an alpha-subunit with a pyruvoyl group at its N-terminus.

It localises to the cytoplasm. It catalyses the reaction L-aspartate + H(+) = beta-alanine + CO2. Its pathway is cofactor biosynthesis; (R)-pantothenate biosynthesis; beta-alanine from L-aspartate: step 1/1. Its function is as follows. Catalyzes the pyruvoyl-dependent decarboxylation of aspartate to produce beta-alanine. In Pyrobaculum islandicum (strain DSM 4184 / JCM 9189 / GEO3), this protein is Aspartate 1-decarboxylase.